Reading from the N-terminus, the 584-residue chain is Leucine-rich repeat and fibronectin type III domain-containing protein 1 (584 aa).

The signal sequence occupies residues 1–17 (MERLVFCVLVFGALAKA). An LRRNT domain is found at 18 to 51 (QLCPGRCICQTISPTLTLLCAKTGLLFVPPTVDR). The Extracellular segment spans residues 18–494 (QLCPGRCICQ…VPSQFLGGTM (477 aa)). 7 LRR repeats span residues 52–73 (KTVELRLTDNFITAVRRKDFLN), 76–97 (SLVHLTLSRNTISQIAPHAFMG), 100–121 (SLRALHMDGNRLSVINSDQLKG), 124–145 (NLRHLILGNNQIHHIEESSFDE), 149–170 (TIEDLDLSYNNLRTLPWEAIAR), 173–194 (NINTLTLDHNLIDHIGVGTFTL), and 197–218 (KLVRLDMTSNRLQTLPPDTLFQ). N-linked (GlcNAc...) asparagine glycosylation is present at N73. An LRRCT domain is found at 241–287 (NPLHCNCELLWLRRLTREDDLETCASPEHLMDKYFWSIQEEEFICEP). Residues 288–375 (PLITKHQVTK…GIATAAVHVH (88 aa)) enclose the Ig-like domain. A disulfide bridge links C310 with C359. N332, N341, N384, N408, and N421 each carry an N-linked (GlcNAc...) asparagine glycan. The interval 393-414 (DPGLSDISTSSRSSSNDSKTHS) is disordered. Residues 397-409 (SDISTSSRSSSND) are compositionally biased toward low complexity. Residues 495–515 (IIIIGGIIVASVLVFIIILMI) form a helical membrane-spanning segment. At 516-584 (RYKAYSGGGG…MVLPILHLLF (69 aa)) the chain is on the cytoplasmic side. The tract at residues 539 to 564 (HVHSQTNGSRSAATKQSEEPPESPAG) is disordered. Polar residues predominate over residues 540–553 (VHSQTNGSRSAATK).

It belongs to the LRFN family.

Its subcellular location is the membrane. The protein resides in the synapse. In terms of biological role, involved in the regulation of excitatory synapses. The sequence is that of Leucine-rich repeat and fibronectin type III domain-containing protein 1 (lrfn1) from Danio rerio (Zebrafish).